The following is a 413-amino-acid chain: Glucose-1-phosphate adenylyltransferase (413 aa).

Alpha-D-glucose 1-phosphate is bound by residues tyrosine 102, glycine 167, 182-183 (EK), and serine 200.

The protein belongs to the bacterial/plant glucose-1-phosphate adenylyltransferase family. In terms of assembly, homotetramer.

The enzyme catalyses alpha-D-glucose 1-phosphate + ATP + H(+) = ADP-alpha-D-glucose + diphosphate. The protein operates within glycan biosynthesis; glycogen biosynthesis. In terms of biological role, involved in the biosynthesis of ADP-glucose, a building block required for the elongation reactions to produce glycogen. Catalyzes the reaction between ATP and alpha-D-glucose 1-phosphate (G1P) to produce pyrophosphate and ADP-Glc. The polypeptide is Glucose-1-phosphate adenylyltransferase (Deinococcus deserti (strain DSM 17065 / CIP 109153 / LMG 22923 / VCD115)).